A 131-amino-acid polypeptide reads, in one-letter code: Small ribosomal subunit protein bS6 (131 aa).

The protein belongs to the bacterial ribosomal protein bS6 family.

Its function is as follows. Binds together with bS18 to 16S ribosomal RNA. The protein is Small ribosomal subunit protein bS6 of Borrelia hermsii (strain HS1 / DAH).